Here is a 228-residue protein sequence, read N- to C-terminus: 7-cyano-7-deazaguanine synthase (228 aa).

Residue 8 to 18 (LSGGMDSATTL) coordinates ATP. 4 residues coordinate Zn(2+): cysteine 188, cysteine 198, cysteine 201, and cysteine 204.

It belongs to the QueC family. Zn(2+) is required as a cofactor.

The enzyme catalyses 7-carboxy-7-deazaguanine + NH4(+) + ATP = 7-cyano-7-deazaguanine + ADP + phosphate + H2O + H(+). It participates in purine metabolism; 7-cyano-7-deazaguanine biosynthesis. In terms of biological role, catalyzes the ATP-dependent conversion of 7-carboxy-7-deazaguanine (CDG) to 7-cyano-7-deazaguanine (preQ(0)). The protein is 7-cyano-7-deazaguanine synthase of Nitrosomonas europaea (strain ATCC 19718 / CIP 103999 / KCTC 2705 / NBRC 14298).